The sequence spans 317 residues: Ribose-phosphate pyrophosphokinase (317 aa).

ATP-binding positions include 41 to 43 (DME) and 100 to 101 (RQ). The Mg(2+) site is built by histidine 134 and aspartate 174. Lysine 197 is an active-site residue. D-ribose 5-phosphate-binding positions include arginine 199, aspartate 223, and 227 to 231 (DSGGT).

Belongs to the ribose-phosphate pyrophosphokinase family. Class I subfamily. In terms of assembly, homohexamer. Mg(2+) is required as a cofactor.

The protein localises to the cytoplasm. It catalyses the reaction D-ribose 5-phosphate + ATP = 5-phospho-alpha-D-ribose 1-diphosphate + AMP + H(+). It participates in metabolic intermediate biosynthesis; 5-phospho-alpha-D-ribose 1-diphosphate biosynthesis; 5-phospho-alpha-D-ribose 1-diphosphate from D-ribose 5-phosphate (route I): step 1/1. Functionally, involved in the biosynthesis of the central metabolite phospho-alpha-D-ribosyl-1-pyrophosphate (PRPP) via the transfer of pyrophosphoryl group from ATP to 1-hydroxyl of ribose-5-phosphate (Rib-5-P). This is Ribose-phosphate pyrophosphokinase from Bradyrhizobium diazoefficiens (strain JCM 10833 / BCRC 13528 / IAM 13628 / NBRC 14792 / USDA 110).